Reading from the N-terminus, the 591-residue chain is CTP synthase (591 aa).

Residues 1–281 are amidoligase domain; sequence MPQSRTHSRT…DAYVVRQLGL (281 aa). Ser-23 contacts CTP. Ser-23 is a binding site for UTP. Residues 24-29 and Asp-81 each bind ATP; that span reads SLGKGL. Mg(2+) is bound by residues Asp-81 and Glu-155. Residues 162–164, 202–207, and Lys-238 contribute to the CTP site; these read DIE and KTKPTQ. UTP contacts are provided by residues 202–207 and Lys-238; that span reads KTKPTQ. A Glutamine amidotransferase type-1 domain is found at 306–554; that stretch reads RIALVGKYVD…VDAALKHKLE (249 aa). Gly-369 provides a ligand contact to L-glutamine. Cys-396 (nucleophile; for glutamine hydrolysis) is an active-site residue. L-glutamine is bound by residues 397-400, Glu-419, and Arg-480; that span reads LGLQ. Catalysis depends on residues His-527 and Glu-529. The tract at residues 568–591 is disordered; that stretch reads AVATDDELADSADRDEVASVDSAG.

This sequence belongs to the CTP synthase family. In terms of assembly, homotetramer.

The catalysed reaction is UTP + L-glutamine + ATP + H2O = CTP + L-glutamate + ADP + phosphate + 2 H(+). The enzyme catalyses L-glutamine + H2O = L-glutamate + NH4(+). It carries out the reaction UTP + NH4(+) + ATP = CTP + ADP + phosphate + 2 H(+). It participates in pyrimidine metabolism; CTP biosynthesis via de novo pathway; CTP from UDP: step 2/2. With respect to regulation, allosterically activated by GTP, when glutamine is the substrate; GTP has no effect on the reaction when ammonia is the substrate. The allosteric effector GTP functions by stabilizing the protein conformation that binds the tetrahedral intermediate(s) formed during glutamine hydrolysis. Inhibited by the product CTP, via allosteric rather than competitive inhibition. Its function is as follows. Catalyzes the ATP-dependent amination of UTP to CTP with either L-glutamine or ammonia as the source of nitrogen. Regulates intracellular CTP levels through interactions with the four ribonucleotide triphosphates. The chain is CTP synthase from Rhodococcus jostii (strain RHA1).